The sequence spans 257 residues: Septu protein PtuB (257 aa).

In terms of domain architecture, HNH spans 49–96 (CVYCECRLDEESKYMEVEHFLPKDTYPNLVVNWRNLLPSCKRCNGKKG).

Functionally, component of antiviral defense system Septu type I, composed of PtuA and PtuB. Expression of Septu type I in B.subtilis (strain BEST7003) confers resistance to phages SBSphiC and SBSphiJ. May be a nuclease. This Bacillus thuringiensis protein is Septu protein PtuB.